A 508-amino-acid chain; its full sequence is BTB/POZ domain-containing protein At3g03510 (508 aa).

The BTB domain maps to 11 to 77 (QDLDLYVKGV…CYGYKIELSA (67 aa)). The 259-residue stretch at 156–414 (TRLLQDLITL…MQVLFVSQMQ (259 aa)) folds into the NPH3 domain. The residue at position 355 (Y355) is a Phosphotyrosine.

The protein belongs to the NPH3 family.

Its pathway is protein modification; protein ubiquitination. In terms of biological role, may act as a substrate-specific adapter of an E3 ubiquitin-protein ligase complex (CUL3-RBX1-BTB) which mediates the ubiquitination and subsequent proteasomal degradation of target proteins. This chain is BTB/POZ domain-containing protein At3g03510, found in Arabidopsis thaliana (Mouse-ear cress).